A 278-amino-acid polypeptide reads, in one-letter code: N-terminal Xaa-Pro-Lys N-methyltransferase 2 (278 aa).

S-adenosyl-L-methionine is bound by residues Gly123, Arg128, Asp145, 174–175, Gln190, and His195; that span reads LQ.

This sequence belongs to the methyltransferase superfamily. NTM1 family.

The protein resides in the nucleus. It catalyses the reaction N-terminal L-alanyl-L-prolyl-L-lysyl-[protein] + S-adenosyl-L-methionine = N-terminal N-methyl-L-alanyl-L-prolyl-L-lysyl-[protein] + S-adenosyl-L-homocysteine + H(+). The enzyme catalyses N-terminal L-prolyl-L-prolyl-L-lysyl-[protein] + S-adenosyl-L-methionine = N-terminal N-methyl-L-prolyl-L-prolyl-L-lysyl-[protein] + S-adenosyl-L-homocysteine + H(+). The catalysed reaction is N-terminal L-seryl-L-prolyl-L-lysyl-[protein] + S-adenosyl-L-methionine = N-terminal N-methyl-L-seryl-L-prolyl-L-lysyl-[protein] + S-adenosyl-L-homocysteine + H(+). Functionally, alpha N-methyltransferase that methylates the N-terminus of target proteins containing the N-terminal motif [Ala/Pro/Ser]-Pro-Lys when the initiator Met is cleaved. Specifically catalyzes monomethylation of exposed alpha-amino group of Ala or Ser residue in the [Ala/Ser]-Pro-Lys motif and Pro in the Pro-Pro-Lys motif. Predominantly functions as a mono-methyltransferase but is also able to di-/tri-methylate the GPKRIA peptide and di-methylate the PPKRIA peptide (in vitro). May activate NTMT1 by priming its substrates for trimethylation. The sequence is that of N-terminal Xaa-Pro-Lys N-methyltransferase 2 (ntmt2) from Danio rerio (Zebrafish).